Reading from the N-terminus, the 422-residue chain is Glutamyl-tRNA reductase (422 aa).

Substrate is bound by residues 49–52 (TCNR), Ser-107, 112–114 (EPQ), and Gln-118. Cys-50 (nucleophile) is an active-site residue. 187-192 (GAGETI) contributes to the NADP(+) binding site.

This sequence belongs to the glutamyl-tRNA reductase family. Homodimer.

The catalysed reaction is (S)-4-amino-5-oxopentanoate + tRNA(Glu) + NADP(+) = L-glutamyl-tRNA(Glu) + NADPH + H(+). It participates in porphyrin-containing compound metabolism; protoporphyrin-IX biosynthesis; 5-aminolevulinate from L-glutamyl-tRNA(Glu): step 1/2. In terms of biological role, catalyzes the NADPH-dependent reduction of glutamyl-tRNA(Glu) to glutamate 1-semialdehyde (GSA). This Pseudomonas paraeruginosa (strain DSM 24068 / PA7) (Pseudomonas aeruginosa (strain PA7)) protein is Glutamyl-tRNA reductase.